The following is a 312-amino-acid chain: Methionyl-tRNA formyltransferase (312 aa).

(6S)-5,6,7,8-tetrahydrofolate is bound at residue 109 to 112 (SILP).

This sequence belongs to the Fmt family.

It catalyses the reaction L-methionyl-tRNA(fMet) + (6R)-10-formyltetrahydrofolate = N-formyl-L-methionyl-tRNA(fMet) + (6S)-5,6,7,8-tetrahydrofolate + H(+). In terms of biological role, attaches a formyl group to the free amino group of methionyl-tRNA(fMet). The formyl group appears to play a dual role in the initiator identity of N-formylmethionyl-tRNA by promoting its recognition by IF2 and preventing the misappropriation of this tRNA by the elongation apparatus. The protein is Methionyl-tRNA formyltransferase of Dictyoglomus thermophilum (strain ATCC 35947 / DSM 3960 / H-6-12).